A 550-amino-acid chain; its full sequence is 2-succinyl-5-enolpyruvyl-6-hydroxy-3-cyclohexene-1-carboxylate synthase (550 aa).

This sequence belongs to the TPP enzyme family. MenD subfamily. In terms of assembly, homodimer. Mg(2+) serves as cofactor. It depends on Mn(2+) as a cofactor. Thiamine diphosphate is required as a cofactor.

It catalyses the reaction isochorismate + 2-oxoglutarate + H(+) = 5-enolpyruvoyl-6-hydroxy-2-succinyl-cyclohex-3-ene-1-carboxylate + CO2. It functions in the pathway quinol/quinone metabolism; 1,4-dihydroxy-2-naphthoate biosynthesis; 1,4-dihydroxy-2-naphthoate from chorismate: step 2/7. Its pathway is quinol/quinone metabolism; menaquinone biosynthesis. Its function is as follows. Catalyzes the thiamine diphosphate-dependent decarboxylation of 2-oxoglutarate and the subsequent addition of the resulting succinic semialdehyde-thiamine pyrophosphate anion to isochorismate to yield 2-succinyl-5-enolpyruvyl-6-hydroxy-3-cyclohexene-1-carboxylate (SEPHCHC). The protein is 2-succinyl-5-enolpyruvyl-6-hydroxy-3-cyclohexene-1-carboxylate synthase of Flavobacterium psychrophilum (strain ATCC 49511 / DSM 21280 / CIP 103535 / JIP02/86).